Consider the following 208-residue polypeptide: Outer-membrane lipoprotein carrier protein (208 aa).

Positions 1–24 (MRMNIVQKILSATCFALLPLLAHA) are cleaved as a signal peptide.

Belongs to the LolA family. In terms of assembly, monomer.

It localises to the periplasm. Functionally, participates in the translocation of lipoproteins from the inner membrane to the outer membrane. Only forms a complex with a lipoprotein if the residue after the N-terminal Cys is not an aspartate (The Asp acts as a targeting signal to indicate that the lipoprotein should stay in the inner membrane). The polypeptide is Outer-membrane lipoprotein carrier protein (Dechloromonas aromatica (strain RCB)).